Here is a 115-residue protein sequence, read N- to C-terminus: U3-lycotoxin-Ls1k (115 aa).

An N-terminal signal peptide occupies residues 1-20 (MKFVLLFGVLVVTLFSYSSA). Residues 21–44 (EMLDDFDQADEDELLSLIEKEEAR) constitute a propeptide that is removed on maturation. 4 disulfide bridges follow: Cys-48–Cys-63, Cys-55–Cys-72, Cys-62–Cys-87, and Cys-74–Cys-85.

Belongs to the neurotoxin 19 (CSTX) family. 01 subfamily. In terms of tissue distribution, expressed by the venom gland.

It is found in the secreted. This Lycosa singoriensis (Wolf spider) protein is U3-lycotoxin-Ls1k.